The following is a 404-amino-acid chain: Probable tRNA sulfurtransferase (404 aa).

The THUMP domain maps to 60–165; the sequence is TAVAESLKQV…EEAAYLSYET (106 aa). ATP is bound by residues 183–184, 208–209, Arg265, Gly287, and Gln296; these read ML and HF.

Belongs to the ThiI family.

It localises to the cytoplasm. It carries out the reaction [ThiI sulfur-carrier protein]-S-sulfanyl-L-cysteine + a uridine in tRNA + 2 reduced [2Fe-2S]-[ferredoxin] + ATP + H(+) = [ThiI sulfur-carrier protein]-L-cysteine + a 4-thiouridine in tRNA + 2 oxidized [2Fe-2S]-[ferredoxin] + AMP + diphosphate. The enzyme catalyses [ThiS sulfur-carrier protein]-C-terminal Gly-Gly-AMP + S-sulfanyl-L-cysteinyl-[cysteine desulfurase] + AH2 = [ThiS sulfur-carrier protein]-C-terminal-Gly-aminoethanethioate + L-cysteinyl-[cysteine desulfurase] + A + AMP + 2 H(+). Its pathway is cofactor biosynthesis; thiamine diphosphate biosynthesis. Functionally, catalyzes the ATP-dependent transfer of a sulfur to tRNA to produce 4-thiouridine in position 8 of tRNAs, which functions as a near-UV photosensor. Also catalyzes the transfer of sulfur to the sulfur carrier protein ThiS, forming ThiS-thiocarboxylate. This is a step in the synthesis of thiazole, in the thiamine biosynthesis pathway. The sulfur is donated as persulfide by IscS. In Streptococcus pneumoniae serotype 2 (strain D39 / NCTC 7466), this protein is Probable tRNA sulfurtransferase.